The following is a 962-amino-acid chain: Replication protein 1a (962 aa).

The Alphavirus-like MT domain occupies leucine 71 to leucine 270. The segment at proline 79–aspartate 356 is methyltransferase. Residues aspartate 536–valine 561 are disordered. Residues serine 546 to valine 561 are compositionally biased toward polar residues. Residues asparagine 667–glutamine 820 enclose the (+)RNA virus helicase ATP-binding domain. Residues leucine 693–lysine 941 are ATP-dependent helicase. A (+)RNA virus helicase C-terminal domain is found at isoleucine 821–cysteine 962.

The protein belongs to the bromoviridae replication protein 1a family. Interacts with RNA-directed RNA polymerase 2a.

It localises to the host endoplasmic reticulum membrane. Its function is as follows. Involved in the virus replication. Contains a helicase domain and a methyltransferase domain. The methyltransferase domain is probably involved in viral RNA capping. Involved in the formation of ER membrane spherular invaginations in which RNA replication complexes form. The polypeptide is Replication protein 1a (Solanum lycopersicum (Tomato)).